The primary structure comprises 669 residues: DNA ligase (669 aa).

NAD(+) contacts are provided by residues 33 to 37 (DAEYD), 82 to 83 (SL), and glutamate 114. Catalysis depends on lysine 116, which acts as the N6-AMP-lysine intermediate. The NAD(+) site is built by arginine 137, glutamate 174, lysine 291, and lysine 315. Zn(2+) contacts are provided by cysteine 409, cysteine 412, cysteine 427, and cysteine 433. One can recognise a BRCT domain in the interval 593 to 669 (EIPQPLAGKV…QTEQDLLALL (77 aa)).

The protein belongs to the NAD-dependent DNA ligase family. LigA subfamily. Requires Mg(2+) as cofactor. It depends on Mn(2+) as a cofactor.

It catalyses the reaction NAD(+) + (deoxyribonucleotide)n-3'-hydroxyl + 5'-phospho-(deoxyribonucleotide)m = (deoxyribonucleotide)n+m + AMP + beta-nicotinamide D-nucleotide.. In terms of biological role, DNA ligase that catalyzes the formation of phosphodiester linkages between 5'-phosphoryl and 3'-hydroxyl groups in double-stranded DNA using NAD as a coenzyme and as the energy source for the reaction. It is essential for DNA replication and repair of damaged DNA. The polypeptide is DNA ligase (Vibrio vulnificus (strain CMCP6)).